The following is a 154-amino-acid chain: Myoglobin (154 aa).

Positions 2-148 (GLSDGEWQLV…FRNDIAAKYK (147 aa)) constitute a Globin domain. Position 4 is a phosphoserine (Ser-4). His-65 is a nitrite binding site. His-65 contributes to the O2 binding site. Thr-68 carries the phosphothreonine modification. His-94 provides a ligand contact to heme b.

Belongs to the globin family. Monomeric.

It localises to the cytoplasm. The protein resides in the sarcoplasm. The catalysed reaction is Fe(III)-heme b-[protein] + nitric oxide + H2O = Fe(II)-heme b-[protein] + nitrite + 2 H(+). It carries out the reaction H2O2 + AH2 = A + 2 H2O. Its function is as follows. Monomeric heme protein which primary function is to store oxygen and facilitate its diffusion within muscle tissues. Reversibly binds oxygen through a pentacoordinated heme iron and enables its timely and efficient release as needed during periods of heightened demand. Depending on the oxidative conditions of tissues and cells, and in addition to its ability to bind oxygen, it also has a nitrite reductase activity whereby it regulates the production of bioactive nitric oxide. Under stress conditions, like hypoxia and anoxia, it also protects cells against reactive oxygen species thanks to its pseudoperoxidase activity. The chain is Myoglobin (MB) from Otolemur crassicaudatus (Brown greater galago).